The chain runs to 244 residues: Type III pantothenate kinase (244 aa).

11 to 18 is a binding site for ATP; sequence DAGNTSIK. Residues Tyr90 and 97 to 100 contribute to the substrate site; that span reads GIDR. Asp99 (proton acceptor) is an active-site residue. Asp119 provides a ligand contact to K(+). An ATP-binding site is contributed by Thr122. Residue Thr175 coordinates substrate.

Belongs to the type III pantothenate kinase family. As to quaternary structure, homodimer. NH4(+) is required as a cofactor. The cofactor is K(+).

Its subcellular location is the cytoplasm. It carries out the reaction (R)-pantothenate + ATP = (R)-4'-phosphopantothenate + ADP + H(+). It functions in the pathway cofactor biosynthesis; coenzyme A biosynthesis; CoA from (R)-pantothenate: step 1/5. Functionally, catalyzes the phosphorylation of pantothenate (Pan), the first step in CoA biosynthesis. This Marinomonas sp. (strain MWYL1) protein is Type III pantothenate kinase.